The chain runs to 185 residues: Elongation factor P (185 aa).

Belongs to the elongation factor P family.

It is found in the cytoplasm. It functions in the pathway protein biosynthesis; polypeptide chain elongation. Functionally, involved in peptide bond synthesis. Stimulates efficient translation and peptide-bond synthesis on native or reconstituted 70S ribosomes in vitro. Probably functions indirectly by altering the affinity of the ribosome for aminoacyl-tRNA, thus increasing their reactivity as acceptors for peptidyl transferase. In Clostridium kluyveri (strain ATCC 8527 / DSM 555 / NBRC 12016 / NCIMB 10680 / K1), this protein is Elongation factor P.